The primary structure comprises 619 residues: ESX-2 secretion system protein EccA2 (619 aa).

373 to 380 (GPPGTGKT) contributes to the ATP binding site.

The protein belongs to the CbxX/CfxQ family. In terms of assembly, part of the ESX-2 / type VII secretion system (T7SS), which is composed of cytosolic and membrane components. Residues 522-619 interact with an artificial EsxB-EsxA heterodimer from the adjacent ESX-1 locus.

It is found in the cytoplasm. Shows ATPase activity. Could provide energy for export of ESX-2 substrates. This Mycobacterium tuberculosis (strain ATCC 25618 / H37Rv) protein is ESX-2 secretion system protein EccA2 (eccA2).